We begin with the raw amino-acid sequence, 297 residues long: Phosphoribosylaminoimidazole-succinocarboxamide synthase (297 aa).

Belongs to the SAICAR synthetase family.

The enzyme catalyses 5-amino-1-(5-phospho-D-ribosyl)imidazole-4-carboxylate + L-aspartate + ATP = (2S)-2-[5-amino-1-(5-phospho-beta-D-ribosyl)imidazole-4-carboxamido]succinate + ADP + phosphate + 2 H(+). It participates in purine metabolism; IMP biosynthesis via de novo pathway; 5-amino-1-(5-phospho-D-ribosyl)imidazole-4-carboxamide from 5-amino-1-(5-phospho-D-ribosyl)imidazole-4-carboxylate: step 1/2. The polypeptide is Phosphoribosylaminoimidazole-succinocarboxamide synthase (Rhodococcus erythropolis (strain PR4 / NBRC 100887)).